The following is a 244-amino-acid chain: Orotidine 5'-phosphate decarboxylase (244 aa).

Substrate is bound by residues Asp-18, Lys-43, 73-82, Ser-130, 182-192, Gly-206, and Arg-207; these read DLKLADIGYI and PGVGAQGGKPG. Catalysis depends on Lys-75, which acts as the Proton donor.

It belongs to the OMP decarboxylase family. Type 1 subfamily. As to quaternary structure, homodimer.

It carries out the reaction orotidine 5'-phosphate + H(+) = UMP + CO2. The protein operates within pyrimidine metabolism; UMP biosynthesis via de novo pathway; UMP from orotate: step 2/2. Catalyzes the decarboxylation of orotidine 5'-monophosphate (OMP) to uridine 5'-monophosphate (UMP). This is Orotidine 5'-phosphate decarboxylase from Aeropyrum pernix (strain ATCC 700893 / DSM 11879 / JCM 9820 / NBRC 100138 / K1).